Here is a 120-residue protein sequence, read N- to C-terminus: NAD(P)H-quinone oxidoreductase subunit 3, chloroplastic (120 aa).

3 helical membrane passes run 9–29, 64–84, and 88–108; these read IFWA…LISG, MFAL…PWAM, and VLGV…ILGL.

The protein belongs to the complex I subunit 3 family. NDH is composed of at least 16 different subunits, 5 of which are encoded in the nucleus.

It is found in the plastid. Its subcellular location is the chloroplast thylakoid membrane. It catalyses the reaction a plastoquinone + NADH + (n+1) H(+)(in) = a plastoquinol + NAD(+) + n H(+)(out). The catalysed reaction is a plastoquinone + NADPH + (n+1) H(+)(in) = a plastoquinol + NADP(+) + n H(+)(out). NDH shuttles electrons from NAD(P)H:plastoquinone, via FMN and iron-sulfur (Fe-S) centers, to quinones in the photosynthetic chain and possibly in a chloroplast respiratory chain. The immediate electron acceptor for the enzyme in this species is believed to be plastoquinone. Couples the redox reaction to proton translocation, and thus conserves the redox energy in a proton gradient. The polypeptide is NAD(P)H-quinone oxidoreductase subunit 3, chloroplastic (Capsella bursa-pastoris (Shepherd's purse)).